A 728-amino-acid polypeptide reads, in one-letter code: Golgin subfamily A member 5 (728 aa).

An N-acetylserine modification is found at S2. Over 2-695 (SWFADLAGRA…IFLRRYPIAR (694 aa)) the chain is Cytoplasmic. 2 positions are modified to dimethylated arginine: R27 and R89. The disordered stretch occupies residues 88 to 202 (SRTGGDASHP…KKSTEESTVS (115 aa)). At S116 the chain carries Phosphoserine. The segment covering 134–146 (PTGRVEIKKEKGK) has biased composition (basic and acidic residues). A compositionally biased stretch (low complexity) spans 152–167 (SSQSSAVSSVTTSVTT). Residues 173 to 187 (ENSGSQSPEVSSSDS) are compositionally biased toward polar residues. A coiled-coil region spans residues 216–628 (GSMSHELSNL…LEQQLHSAAT (413 aa)). A helical; Anchor for type IV membrane protein membrane pass occupies residues 696 to 716 (VFVIIYMALLHLWVMIVLLTY). Residues 717 to 728 (SPEMHHDQPYGK) are Lumenal-facing.

Homodimer. Interacts with RAB1A that has been activated by GTP-binding. Interacts with isoform CASP of CUX1. In terms of processing, highly phosphorylated during mitosis. Phosphorylation is barely detectable during interphase.

Its subcellular location is the golgi apparatus membrane. Its function is as follows. Involved in maintaining Golgi structure. Stimulates the formation of Golgi stacks and ribbons. Involved in intra-Golgi retrograde transport. This chain is Golgin subfamily A member 5 (Golga5), found in Rattus norvegicus (Rat).